The following is a 259-amino-acid chain: MTDLKASSLRALKLMDLTTLNDDDTDEKVIALCHQAKTPVGNTAAICIYPRFIPIARKTLKEQGTPEIRIATVTNFPHGNDDIEIALAETRAAIAYGADEVDVVFPYRALMAGNEQVGFDLVKACKEACAAANVLLKVIIETGELKDEALIRKASEISIKAGADFIKTSTGKVAVNATPESARIMMEVIRDMGVEKIVGFKPAGGVRTAEDAQKYLAIADELFGADWADARHYRFGASSLLASLLKALGHGDGKSASSY.

Catalysis depends on D102, which acts as the Proton donor/acceptor. K167 functions as the Schiff-base intermediate with acetaldehyde in the catalytic mechanism. K201 serves as the catalytic Proton donor/acceptor.

The protein belongs to the DeoC/FbaB aldolase family. DeoC type 2 subfamily.

The protein localises to the cytoplasm. The enzyme catalyses 2-deoxy-D-ribose 5-phosphate = D-glyceraldehyde 3-phosphate + acetaldehyde. It functions in the pathway carbohydrate degradation; 2-deoxy-D-ribose 1-phosphate degradation; D-glyceraldehyde 3-phosphate and acetaldehyde from 2-deoxy-alpha-D-ribose 1-phosphate: step 2/2. Its function is as follows. Catalyzes a reversible aldol reaction between acetaldehyde and D-glyceraldehyde 3-phosphate to generate 2-deoxy-D-ribose 5-phosphate. The protein is Deoxyribose-phosphate aldolase of Escherichia coli O1:K1 / APEC.